Consider the following 198-residue polypeptide: Inosine triphosphate pyrophosphatase (198 aa).

A2 carries the N-acetylalanine modification. Residue 14 to 19 (TGNAKK) coordinates ITP. E44 contributes to the Mg(2+) binding site. Residues K56, 72-73 (DT), and K89 each bind ITP. S146 bears the Phosphoserine mark. Residues 149-152 (FGWD), K172, and 177-178 (HR) each bind ITP.

This sequence belongs to the HAM1 NTPase family. As to quaternary structure, homodimer. Mg(2+) is required as a cofactor. Mn(2+) serves as cofactor.

Its subcellular location is the cytoplasm. The enzyme catalyses ITP + H2O = IMP + diphosphate + H(+). The catalysed reaction is dITP + H2O = dIMP + diphosphate + H(+). It carries out the reaction XTP + H2O = XMP + diphosphate + H(+). It catalyses the reaction N(6)-hydroxy-dATP + H2O = N(6)-hydroxy-dAMP + diphosphate + H(+). Pyrophosphatase that hydrolyzes the non-canonical purine nucleotides inosine triphosphate (ITP), deoxyinosine triphosphate (dITP) as well as 2'-deoxy-N-6-hydroxylaminopurine triphosphate (dHAPTP) and xanthosine 5'-triphosphate (XTP) to their respective monophosphate derivatives. The enzyme does not distinguish between the deoxy- and ribose forms. Probably excludes non-canonical purines from RNA and DNA precursor pools, thus preventing their incorporation into RNA and DNA and avoiding chromosomal lesions. This chain is Inosine triphosphate pyrophosphatase (Itpa), found in Rattus norvegicus (Rat).